Here is a 101-residue protein sequence, read N- to C-terminus: Small ribosomal subunit protein bS16 (101 aa).

It belongs to the bacterial ribosomal protein bS16 family.

This is Small ribosomal subunit protein bS16 from Ureaplasma parvum serovar 3 (strain ATCC 700970).